We begin with the raw amino-acid sequence, 646 residues long: Threonine--tRNA ligase (646 aa).

Positions 1-63 constitute a TGS domain; sequence MAQISLTFPD…EADAKIAIHT (63 aa). Positions 247–544 are catalytic; that stretch reads DHRKLGKEME…LIENYAGKLP (298 aa). Zn(2+) contacts are provided by C344, H395, and H521.

It belongs to the class-II aminoacyl-tRNA synthetase family. Homodimer. Requires Zn(2+) as cofactor.

The protein resides in the cytoplasm. It carries out the reaction tRNA(Thr) + L-threonine + ATP = L-threonyl-tRNA(Thr) + AMP + diphosphate + H(+). Its function is as follows. Catalyzes the attachment of threonine to tRNA(Thr) in a two-step reaction: L-threonine is first activated by ATP to form Thr-AMP and then transferred to the acceptor end of tRNA(Thr). Also edits incorrectly charged L-seryl-tRNA(Thr). The chain is Threonine--tRNA ligase from Cereibacter sphaeroides (strain ATCC 17025 / ATH 2.4.3) (Rhodobacter sphaeroides).